A 682-amino-acid polypeptide reads, in one-letter code: Serine/threonine-protein kinase PLK2 (682 aa).

The interval 25-67 is disordered; sequence ACGGDSKKKRPQQPSEDGQPQAQVTPAAPHHHHHHSHSGPEIS. A compositionally biased stretch (polar residues) spans 36–48; it reads QQPSEDGQPQAQV. A Protein kinase domain is found at 79–331; it reads YCRGKVLGKG…LDDIIRHDFF (253 aa). ATP contacts are provided by residues 85–93 and Lys-108; that span reads LGKGGFAKC. Asp-202 acts as the Proton acceptor in catalysis. The residue at position 236 (Thr-236) is a Phosphothreonine. The disordered stretch occupies residues 403 to 432; sequence SITQQPSKHRADEEPQPPPTTVARSGTSAV. POLO box domains are found at residues 500–578 and 598–682; these read WVTK…YMEE and YLLQ…QRCN.

It belongs to the protein kinase superfamily. Ser/Thr protein kinase family. CDC5/Polo subfamily. Interacts with NSF; causing NSF dissociation from GRIA2. Interacts with CIB1. In terms of processing, catalytic activity is enhanced by phosphorylation of Thr-236. In terms of tissue distribution, brain, lung and heart.

Its subcellular location is the cytoplasm. It is found in the cytoskeleton. The protein resides in the microtubule organizing center. It localises to the centrosome. The protein localises to the centriole. Its subcellular location is the cell projection. It is found in the dendrite. It catalyses the reaction L-seryl-[protein] + ATP = O-phospho-L-seryl-[protein] + ADP + H(+). The catalysed reaction is L-threonyl-[protein] + ATP = O-phospho-L-threonyl-[protein] + ADP + H(+). Activated by phosphorylation of Thr-236. Once activated, activity is stimulated by binding target proteins. Functionally, tumor suppressor serine/threonine-protein kinase involved in synaptic plasticity, centriole duplication and G1/S phase transition. Polo-like kinases act by binding and phosphorylating proteins that are already phosphorylated on a specific motif recognized by the POLO box domains. Phosphorylates CPAP, NPM1, RAPGEF2, RASGRF1, SNCA, SIPA1L1 and SYNGAP1. Plays a key role in synaptic plasticity and memory by regulating the Ras and Rap protein signaling: required for overactivity-dependent spine remodeling by phosphorylating the Ras activator RASGRF1 and the Rap inhibitor SIPA1L1 leading to their degradation by the proteasome. Conversely, phosphorylates the Rap activator RAPGEF2 and the Ras inhibitor SYNGAP1, promoting their activity. Also regulates synaptic plasticity independently of kinase activity, via its interaction with NSF that disrupts the interaction between NSF and the GRIA2 subunit of AMPARs, leading to a rapid rundown of AMPAR-mediated current that occludes long term depression. Required for procentriole formation and centriole duplication by phosphorylating CPAP and NPM1, respectively. Its induction by p53/TP53 suggests that it may participate in the mitotic checkpoint following stress. The polypeptide is Serine/threonine-protein kinase PLK2 (Plk2) (Mus musculus (Mouse)).